The chain runs to 243 residues: Probable transcriptional regulatory protein BPP2422 (243 aa).

Residues 1 to 21 (MAGHSKWANIQHRKGRQDAKR) form a disordered region.

The protein belongs to the TACO1 family.

The protein localises to the cytoplasm. In Bordetella parapertussis (strain 12822 / ATCC BAA-587 / NCTC 13253), this protein is Probable transcriptional regulatory protein BPP2422.